Here is a 196-residue protein sequence, read N- to C-terminus: Chromophore lyase CpcS/CpeS 2 (196 aa).

The protein belongs to the CpcS/CpeS biliprotein lyase family.

Its function is as follows. Covalently attaches a chromophore to Cys residue(s) of phycobiliproteins. The protein is Chromophore lyase CpcS/CpeS 2 of Trichodesmium erythraeum (strain IMS101).